Here is a 174-residue protein sequence, read N- to C-terminus: ATP-dependent protease subunit HslV (174 aa).

Residue T2 is part of the active site. G157, C160, and T163 together coordinate Na(+).

The protein belongs to the peptidase T1B family. HslV subfamily. A double ring-shaped homohexamer of HslV is capped on each side by a ring-shaped HslU homohexamer. The assembly of the HslU/HslV complex is dependent on binding of ATP.

The protein resides in the cytoplasm. It carries out the reaction ATP-dependent cleavage of peptide bonds with broad specificity.. With respect to regulation, allosterically activated by HslU binding. Its function is as follows. Protease subunit of a proteasome-like degradation complex believed to be a general protein degrading machinery. This is ATP-dependent protease subunit HslV from Shewanella pealeana (strain ATCC 700345 / ANG-SQ1).